A 396-amino-acid polypeptide reads, in one-letter code: Anhydro-N-acetylmuramic acid kinase (396 aa).

21-28 is a binding site for ATP; sequence GTSADGID.

It belongs to the anhydro-N-acetylmuramic acid kinase family.

It catalyses the reaction 1,6-anhydro-N-acetyl-beta-muramate + ATP + H2O = N-acetyl-D-muramate 6-phosphate + ADP + H(+). It participates in amino-sugar metabolism; 1,6-anhydro-N-acetylmuramate degradation. It functions in the pathway cell wall biogenesis; peptidoglycan recycling. Its function is as follows. Catalyzes the specific phosphorylation of 1,6-anhydro-N-acetylmuramic acid (anhMurNAc) with the simultaneous cleavage of the 1,6-anhydro ring, generating MurNAc-6-P. Is required for the utilization of anhMurNAc either imported from the medium or derived from its own cell wall murein, and thus plays a role in cell wall recycling. The chain is Anhydro-N-acetylmuramic acid kinase from Caldanaerobacter subterraneus subsp. tengcongensis (strain DSM 15242 / JCM 11007 / NBRC 100824 / MB4) (Thermoanaerobacter tengcongensis).